The sequence spans 322 residues: Quinolinate synthase (322 aa).

Iminosuccinate-binding residues include H37 and S54. [4Fe-4S] cluster is bound at residue C99. Residues 125 to 127 and S142 each bind iminosuccinate; that span reads YIN. Position 185 (C185) interacts with [4Fe-4S] cluster. Residues 211–213 and T228 each bind iminosuccinate; that span reads HPE. Residue C278 participates in [4Fe-4S] cluster binding.

It belongs to the quinolinate synthase family. Type 2 subfamily. It depends on [4Fe-4S] cluster as a cofactor.

The protein resides in the cytoplasm. The catalysed reaction is iminosuccinate + dihydroxyacetone phosphate = quinolinate + phosphate + 2 H2O + H(+). It functions in the pathway cofactor biosynthesis; NAD(+) biosynthesis; quinolinate from iminoaspartate: step 1/1. Functionally, catalyzes the condensation of iminoaspartate with dihydroxyacetone phosphate to form quinolinate. The polypeptide is Quinolinate synthase (Chlorobaculum parvum (strain DSM 263 / NCIMB 8327) (Chlorobium vibrioforme subsp. thiosulfatophilum)).